Reading from the N-terminus, the 536-residue chain is Prolyl 3-hydroxylase sudestada1 (536 aa).

Positions 1–35 are disordered; sequence METSSSSPVKPRRKDKDEDGRAEQEDSADQVGEPH. Residues 14-24 show a composition bias toward basic and acidic residues; the sequence is KDKDEDGRAEQ. Positions 165 to 275 constitute a Fe2OG dioxygenase domain; it reads KLDYVSASCS…RLTINGWFHG (111 aa). Fe cation contacts are provided by His185 and Asp187. Residue Tyr199 participates in 2-oxoglutarate binding. Residue His254 participates in Fe cation binding. Arg266 is a 2-oxoglutarate binding site. The interval 467-486 is disordered; it reads PTAKAPTDGRRSDYDDEEED.

The protein belongs to the TPA1 family. As to quaternary structure, monomer. It depends on Fe(2+) as a cofactor. L-ascorbate serves as cofactor. In terms of tissue distribution, in third-instar larval tissues,highly expressed in the fat body, with significant expression in other organs including the brain, salivary glands, imaginal disks and gut.

It localises to the nucleus. It is found in the cytoplasm. It catalyses the reaction [ribosomal protein uS12]-L-proline + 2-oxoglutarate + O2 = [ribosomal protein uS12]-(3S)-3-hydroxy-L-proline + succinate + CO2. Its function is as follows. Prolyl 3-hydroxylase that catalyzes 3-hydroxylation of 'Pro-62' of small ribosomal subunit uS12 (RpS23), thereby regulating protein translation termination efficiency. The polypeptide is Prolyl 3-hydroxylase sudestada1 (sud1) (Drosophila melanogaster (Fruit fly)).